The following is a 663-amino-acid chain: DNA topoisomerase 4 subunit B (663 aa).

Residues Tyr7, Asn47, Asp74, 114 to 120 (GLHGVGA), and Lys341 contribute to the ATP site. The interval 386-416 (REAARKAREDARSGKKNKRKDTLLSGKLTPA) is disordered. Residues 387–398 (EAARKAREDARS) are compositionally biased toward basic and acidic residues. The Toprim domain occupies 424–538 (NELYLVEGDS…ADRVFIALPP (115 aa)). Mg(2+)-binding residues include Glu430, Asp503, and Asp505.

This sequence belongs to the type II topoisomerase family. ParE type 2 subfamily. As to quaternary structure, heterotetramer composed of ParC and ParE. It depends on Mg(2+) as a cofactor. Requires Mn(2+) as cofactor. Ca(2+) is required as a cofactor.

The enzyme catalyses ATP-dependent breakage, passage and rejoining of double-stranded DNA.. Topoisomerase IV is essential for chromosome segregation. It relaxes supercoiled DNA. Performs the decatenation events required during the replication of a circular DNA molecule. This is DNA topoisomerase 4 subunit B from Staphylococcus aureus (strain MSSA476).